The following is a 531-amino-acid chain: MPKFVVVTGGVMSGLGKGVVAASVGRILRARGLSVTAVKIDPYLNVDAGTMNPYQHGEVFVTFDGGETDLDLGHYERFLDVELPHRNNITSGQIYKSVIEKERRGDYLGQTVQLIPHVTDEIKRRLVEAAGGFDVAIVEIGGTVGDYEQLPFLEAVRQLRLELGGDVLFVHVAWVPILKTTGEFKTKPLQHSVAELRRYGIQPDAVVVRSERPIDANAVKKISLFAHVPQHAIFNSYDVDTIYKVPLLLERQGMGDFLVERLRLRGRSPDYGEWESFVARLSAPSRKIAVGMCGKYVELPDAYLSIVEALRHAGAALDVRPELVWINSVEVEKNPDLLPKAGVDAMVVLPGFGKRGTEGMIECVRYARTEKIPFLGICFGMQLAVVEFARNVLGLRDANSTELDPQTPHPVVHLAPEQESVDVLGGSMILGNREVEIVPGTLAAALYKASLTVERHRHRFEVNLAYVPKLQEAGLVVSGWRRDVKRVEIIELPAHPYFIATQFHPEFKSRPTRPRPLFLGLLSAAVEQSRR.

An amidoligase domain region spans residues 1–264 (MPKFVVVTGG…GDFLVERLRL (264 aa)). Serine 13 is a binding site for CTP. Serine 13 lines the UTP pocket. 14 to 19 (GLGKGV) provides a ligand contact to ATP. Residue tyrosine 54 coordinates L-glutamine. Aspartate 71 contacts ATP. Residues aspartate 71 and glutamate 139 each contribute to the Mg(2+) site. CTP contacts are provided by residues 146–148 (DYE), 185–190 (KTKPLQ), and lysine 221. UTP contacts are provided by residues 185-190 (KTKPLQ) and lysine 221. Residues 293–531 (CGKYVELPDA…LSAAVEQSRR (239 aa)) form the Glutamine amidotransferase type-1 domain. Glycine 351 is an L-glutamine binding site. Cysteine 378 serves as the catalytic Nucleophile; for glutamine hydrolysis. L-glutamine is bound by residues 379 to 382 (FGMQ), glutamate 402, and arginine 459. Active-site residues include histidine 504 and glutamate 506.

It belongs to the CTP synthase family. As to quaternary structure, homotetramer.

It carries out the reaction UTP + L-glutamine + ATP + H2O = CTP + L-glutamate + ADP + phosphate + 2 H(+). The enzyme catalyses L-glutamine + H2O = L-glutamate + NH4(+). It catalyses the reaction UTP + NH4(+) + ATP = CTP + ADP + phosphate + 2 H(+). It participates in pyrimidine metabolism; CTP biosynthesis via de novo pathway; CTP from UDP: step 2/2. Allosterically activated by GTP, when glutamine is the substrate; GTP has no effect on the reaction when ammonia is the substrate. The allosteric effector GTP functions by stabilizing the protein conformation that binds the tetrahedral intermediate(s) formed during glutamine hydrolysis. Inhibited by the product CTP, via allosteric rather than competitive inhibition. In terms of biological role, catalyzes the ATP-dependent amination of UTP to CTP with either L-glutamine or ammonia as the source of nitrogen. Regulates intracellular CTP levels through interactions with the four ribonucleotide triphosphates. The sequence is that of CTP synthase from Pyrobaculum calidifontis (strain DSM 21063 / JCM 11548 / VA1).